The sequence spans 162 residues: Cytochrome c-type biogenesis protein CcmE (162 aa).

Residues 1-8 lie on the Cytoplasmic side of the membrane; it reads MNPVRKKR. The helical; Signal-anchor for type II membrane protein transmembrane segment at 9 to 29 threads the bilayer; sequence LIIVLAIVAGVGAAVGLALSA. Residues 30–162 are Periplasmic-facing; that stretch reads LQQNINLFYT…GETSYNQEGK (133 aa). Heme contacts are provided by histidine 124 and tyrosine 128. Residues 139–148 show a composition bias toward basic and acidic residues; sequence DSGQLKHYEN. Positions 139–162 are disordered; that stretch reads DSGQLKHYENGKAAGETSYNQEGK.

This sequence belongs to the CcmE/CycJ family.

Its subcellular location is the cell inner membrane. Functionally, heme chaperone required for the biogenesis of c-type cytochromes. Transiently binds heme delivered by CcmC and transfers the heme to apo-cytochromes in a process facilitated by CcmF and CcmH. This chain is Cytochrome c-type biogenesis protein CcmE, found in Pseudomonas aeruginosa (strain ATCC 15692 / DSM 22644 / CIP 104116 / JCM 14847 / LMG 12228 / 1C / PRS 101 / PAO1).